Reading from the N-terminus, the 216-residue chain is MAGRGGAARPNGPAAGNKICQFKLVLLGESAVGKSSLVLRFVKGQFHEYQESTIGAAFLTQTVCLDDTTVKFEIWDTAGQERYHSLAPMYYRGAQAAIVVYDITNTDTFARAKNWVKELQRQASPNIVIALAGNKADLASKRAVEFQEAQAYADDNSLLFMETSAKTAMNVNEIFMAIAKKLPKNEPQNAAGAPGRTRGVDLQESNPASRSQCCSN.

Positions 30, 31, 33, 34, 35, 36, 47, 48, 53, and 79 each coordinate GTP. Ser-35 contributes to the Mg(2+) binding site. Short sequence motifs (switch) lie at residues 45–57 (QFHEYQESTIGAA) and 78–94 (AGQERYHSLAPMYYRGA). Thr-53 lines the Mg(2+) pocket. At Ser-85 the chain carries Phosphoserine. Positions 134, 135, 137, 165, and 166 each coordinate GTP. A disordered region spans residues 185 to 216 (NEPQNAAGAPGRTRGVDLQESNPASRSQCCSN). Over residues 203–216 (QESNPASRSQCCSN) the composition is skewed to polar residues. Residues Cys-213 and Cys-214 are each lipidated (S-geranylgeranyl cysteine).

This sequence belongs to the small GTPase superfamily. Rab family. As to quaternary structure, interacts with EEA1 and INCA1. Interacts with GDI1, GDI2, CHML and CHM; phosphorylation at Ser-85 disrupts this interaction. Mg(2+) is required as a cofactor. In terms of processing, phosphorylation of Ser-85 in the switch II region by LRRK2 prevents the association of RAB regulatory proteins, including CHM, CHML and RAB GDP dissociation inhibitors GDI1 and GDI2.

The protein localises to the cell membrane. It is found in the early endosome membrane. It localises to the melanosome. The catalysed reaction is GTP + H2O = GDP + phosphate + H(+). Regulated by guanine nucleotide exchange factors (GEFs) which promote the exchange of bound GDP for free GTP. Regulated by GTPase activating proteins (GAPs) which increase the GTP hydrolysis activity. Inhibited by GDP dissociation inhibitors (GDIs). The small GTPases Rab are key regulators of intracellular membrane trafficking, from the formation of transport vesicles to their fusion with membranes. Rabs cycle between an inactive GDP-bound form and an active GTP-bound form that is able to recruit to membranes different sets of downstream effectors directly responsible for vesicle formation, movement, tethering and fusion. The sequence is that of Ras-related protein Rab-5C from Mus musculus (Mouse).